Here is a 759-residue protein sequence, read N- to C-terminus: MAKTKGLPKDTAVTPSPHLRPHTADLNRLLAGEHHDPHSILGAHEYDDHTVIRAYRPHATEVAAVVGGERHVFTHLEAGVFAVTLPFTGLIDYRLEVGYDHGGDQPHIHHTADAYRFLPTLGEMDLHLFSEGRHERLWEVLGAHPRTFETPDGVVEGVSFAVWAPNANGVQLIGDFNHWDGNEAQLRVLGSTGVWELFWPDFPVDGLYKFRIHGADGVVSERADPMAFATEVPPQTASRVTTSSYTWNDDAWMTQRAAQNPVFEPMSTLEVHLMSWRPGLSYVELADQLTEYIVEHGFTHVEMLPVAEHPFGGSWGYQVTSYYAPTSRLGTPDEFRYLVDRLHQAGIGVIVDWVPAHFPKDAWALGRFDGTALYEHADPRRGEQLDWGTYVFDFGRAEVRNFLVANALYWLQEFHVDGLRVDAVASMLYLDYSRPEGGWTPNIYGGRENLEAVQFLQEMNATVHKASPGIVTIAEESTSWPGVTRPTNLGGLGFSMKWNMGWMNDTLAFISRDPIHRSYHHHEMTFSMLYAFSENYVLPISHDEVVHGKGTLWGRMLGDDHRKAAGVRQLLAYQWAHPGKQLLFQGQEFGQRAEWSEERGVDWYQLDENSYSGGILRMISDMNGIYTSHRALWSHDTSPEGYSWIDANDSTNNVLSFLRYGDDGSVLACVFNFSGSEHSQYRLGLPHAGTWREVLNTDAADYNGAGIGNYGAVQATDEPWHGRPASAVMVLPPLSALWFEPVAAEAPVVQEPPTAPPLS.

The interval 1-22 (MAKTKGLPKDTAVTPSPHLRPH) is disordered. Asp-422 functions as the Nucleophile in the catalytic mechanism. The Proton donor role is filled by Glu-475.

This sequence belongs to the glycosyl hydrolase 13 family. GlgB subfamily. As to quaternary structure, monomer.

It catalyses the reaction Transfers a segment of a (1-&gt;4)-alpha-D-glucan chain to a primary hydroxy group in a similar glucan chain.. It functions in the pathway glycan biosynthesis; glycogen biosynthesis. Its function is as follows. Catalyzes the formation of the alpha-1,6-glucosidic linkages in glycogen by scission of a 1,4-alpha-linked oligosaccharide from growing alpha-1,4-glucan chains and the subsequent attachment of the oligosaccharide to the alpha-1,6 position. This Mycobacterium sp. (strain KMS) protein is 1,4-alpha-glucan branching enzyme GlgB.